A 490-amino-acid chain; its full sequence is Probable G-protein coupled receptor npr-8 (490 aa).

Residues 1 to 55 lie on the Extracellular side of the membrane; that stretch reads MEVKDIDNYCDRGISPNASNYLTYPFDGLCLQKFFYQLQTSLRRFTPYEEIIYTT. An N-linked (GlcNAc...) asparagine glycan is attached at Asn-17. The helical transmembrane segment at 56-76 threads the bilayer; it reads VYIIISVAAVIGNGLVIMAVV. Over 77-86 the chain is Cytoplasmic; sequence RKKTMRTNRN. The helical transmembrane segment at 87–107 threads the bilayer; the sequence is VLILNLALSNLILAITNIPFL. Residues 108 to 125 lie on the Extracellular side of the membrane; sequence WLPSIDFEFPYSRFFCKF. Residues 126 to 146 form a helical membrane-spanning segment; the sequence is ANVLPGSNIYCSTLTISVMAI. At 147–166 the chain is on the cytoplasmic side; it reads DRYYSVKKLKIASNRKQCFH. A helical membrane pass occupies residues 167–187; sequence AVLVSLAIWIVSFILSLPLLL. Topologically, residues 188–236 are extracellular; the sequence is YYETSMLYVMREIRVVDQSGQEVIRSYGWRQCRLVSAGRLPDITQSIQL. A helical transmembrane segment spans residues 237–257; the sequence is LMSILQVAFLYIVPLFVLSIF. At 258-331 the chain is on the cytoplasmic side; sequence NVKLTRFLKT…QRTNRTTSLL (74 aa). A disordered region spans residues 272-322; sequence MSKTRAPPKRFDRSDSHHNSLKNNNNHTSSLRSPSMPSIRSSITERNKTNQ. Basic and acidic residues predominate over residues 280–289; the sequence is KRFDRSDSHH. The span at 292–313 shows a compositional bias: low complexity; it reads LKNNNNHTSSLRSPSMPSIRSS. The helical transmembrane segment at 332 to 352 threads the bilayer; that stretch reads IAMAGSYAALWFPFTLITFLI. At 353–374 the chain is on the extracellular side; sequence DFELIINQDYVNLVERIDQTCK. A helical transmembrane segment spans residues 375 to 395; that stretch reads MVSMLSICVNPFLYGFLNTNF. Topologically, residues 396–490 are cytoplasmic; sequence RHEFSDIYYR…DDDIEKDSFV (95 aa).

It belongs to the G-protein coupled receptor 1 family.

Its subcellular location is the cell membrane. Its function is as follows. Not known. Putative receptor. The sequence is that of Probable G-protein coupled receptor npr-8 from Caenorhabditis elegans.